A 554-amino-acid polypeptide reads, in one-letter code: Phenylalanine--tRNA ligase beta subunit (554 aa).

The B5 domain occupies 274–351 (LTPDSAEITI…INYGYENFNG (78 aa)). Residues Asp-329, Asp-335, and Asp-339 each coordinate Mg(2+).

Belongs to the phenylalanyl-tRNA synthetase beta subunit family. Type 2 subfamily. As to quaternary structure, tetramer of two alpha and two beta subunits. Requires Mg(2+) as cofactor.

The protein localises to the cytoplasm. The catalysed reaction is tRNA(Phe) + L-phenylalanine + ATP = L-phenylalanyl-tRNA(Phe) + AMP + diphosphate + H(+). The polypeptide is Phenylalanine--tRNA ligase beta subunit (Methanococcus aeolicus (strain ATCC BAA-1280 / DSM 17508 / OCM 812 / Nankai-3)).